The chain runs to 357 residues: Sorbitol dehydrogenase (357 aa).

Alanine 2 is modified (N-acetylalanine). Residue cysteine 45 coordinates Zn(2+). Residue tyrosine 51 coordinates substrate. Positions 70 and 71 each coordinate Zn(2+). Glutamate 156 is a binding site for substrate. NAD(+) is bound by residues isoleucine 184, aspartate 204, and arginine 209. 2 positions are modified to phosphoserine: serine 211 and serine 225. Residues valine 273 to leucine 275 and valine 297 to arginine 299 each bind NAD(+). Substrate contacts are provided by arginine 299 and tyrosine 300.

Belongs to the zinc-containing alcohol dehydrogenase family. Homotetramer. Zn(2+) is required as a cofactor.

It localises to the mitochondrion membrane. Its subcellular location is the cell projection. It is found in the cilium. The protein resides in the flagellum. It carries out the reaction xylitol + NAD(+) = D-xylulose + NADH + H(+). It catalyses the reaction L-iditol + NAD(+) = keto-L-sorbose + NADH + H(+). The enzyme catalyses keto-D-fructose + NADH + H(+) = D-sorbitol + NAD(+). Its function is as follows. Polyol dehydrogenase that catalyzes the reversible NAD(+)-dependent oxidation of various sugar alcohols. Is active with xylitol, L-iditol and D-sorbitol (D-glucitol) as substrates, leading to the C2-oxidized products D-xylulose, L-sorbose and D-fructose, respectively. Is a key enzyme in the polyol pathway that interconverts glucose and fructose via sorbitol, which constitutes an important alternate route for glucose metabolism. May play a role in sperm motility by using sorbitol as an alternative energy source for sperm motility. This Macaca fascicularis (Crab-eating macaque) protein is Sorbitol dehydrogenase (SORD).